The following is a 557-amino-acid chain: DNA ligase (557 aa).

Glutamate 249 contributes to the ATP binding site. Lysine 251 functions as the N6-AMP-lysine intermediate in the catalytic mechanism. 6 residues coordinate ATP: arginine 256, arginine 271, glutamate 301, phenylalanine 340, arginine 417, and lysine 423.

This sequence belongs to the ATP-dependent DNA ligase family. The cofactor is Mg(2+).

The enzyme catalyses ATP + (deoxyribonucleotide)n-3'-hydroxyl + 5'-phospho-(deoxyribonucleotide)m = (deoxyribonucleotide)n+m + AMP + diphosphate.. DNA ligase that seals nicks in double-stranded DNA during DNA replication, DNA recombination and DNA repair. This is DNA ligase from Methanothermobacter thermautotrophicus (Methanobacterium thermoformicicum).